The chain runs to 90 residues: Small ribosomal subunit protein uS17 (90 aa).

It belongs to the universal ribosomal protein uS17 family. In terms of assembly, part of the 30S ribosomal subunit.

Functionally, one of the primary rRNA binding proteins, it binds specifically to the 5'-end of 16S ribosomal RNA. In Cutibacterium acnes (strain DSM 16379 / KPA171202) (Propionibacterium acnes), this protein is Small ribosomal subunit protein uS17.